A 200-amino-acid chain; its full sequence is Thymidylate kinase (200 aa).

Residue 10–17 (GIDGAGKS) coordinates ATP.

It belongs to the thymidylate kinase family.

It catalyses the reaction dTMP + ATP = dTDP + ADP. Its function is as follows. Phosphorylation of dTMP to form dTDP in both de novo and salvage pathways of dTTP synthesis. The protein is Thymidylate kinase of Cupriavidus metallidurans (strain ATCC 43123 / DSM 2839 / NBRC 102507 / CH34) (Ralstonia metallidurans).